The chain runs to 514 residues: MEISWGRAMWRNFLGQSPDWYKLALLVFLIINPLTFFTNSFVAGWLLVAEFIFTLAMALKCYPLLPGGLLAIEAVVIGMTSAAHVREEVAANLEVLLLLMFMVAGIYFMKQLLLFIFTRLLLSIRSKMVLSLAFCVAAAFLSAFLDALTVVAVVISVAVGFYGIYHRVASSRGEENDMLDDSHIDQHYKTVLEQFRGFLRSLMMHAGVGTALGGVMTMVGEPQNLIIAKAAGWHFGDFFLRMSPVTVPVLVCGLLTCMLVEKMRWFGYGETLPEKVRNVLQQFDDQSRKQRTRQDKIKLIVQAIIGVWLVTALALHLAEVGLIGLSVIILATALTGVTDEHAIGKAFTESLPFTALLTVFFSIVAVIIDQHLFAPIIQFVLQASEHAQLTLFYLFNGLLSSISDNVFVGTIYINEAKAAMENGAISLKQFELLAVAINTGTNLPSVATPNGQAAFLFLLTSALAPLIRLSYGRMVWMALPYTIILTLVGLLCVEFTLAPVNEWMTQAGWLATLS.

The next 12 helical transmembrane spans lie at 23–43 (LALL…SFVA), 52–72 (IFTL…LLAI), 97–117 (LLLM…LFIF), 120–140 (LLLS…AAAF), 144–164 (FLDA…FYGI), 202–222 (LMMH…VGEP), 238–258 (FFLR…LTCM), 303–323 (AIIG…VGLI), 357–377 (LTVF…APII), 391–411 (LFYL…VGTI), 447–467 (ATPN…APLI), and 475–495 (VWMA…CVEF).

This sequence belongs to the NhaB Na(+)/H(+) (TC 2.A.34) antiporter family.

Its subcellular location is the cell inner membrane. It catalyses the reaction 2 Na(+)(in) + 3 H(+)(out) = 2 Na(+)(out) + 3 H(+)(in). Functionally, na(+)/H(+) antiporter that extrudes sodium in exchange for external protons. The protein is Na(+)/H(+) antiporter NhaB of Salmonella arizonae (strain ATCC BAA-731 / CDC346-86 / RSK2980).